A 191-amino-acid chain; its full sequence is Thymidylate kinase (191 aa).

Residue 7 to 14 coordinates ATP; sequence GVDGVGKS.

This sequence belongs to the thymidylate kinase family.

It carries out the reaction dTMP + ATP = dTDP + ADP. In terms of biological role, phosphorylation of dTMP to form dTDP in both de novo and salvage pathways of dTTP synthesis. The polypeptide is Thymidylate kinase (Helicobacter pylori (strain HPAG1)).